A 176-amino-acid chain; its full sequence is ATP synthase subunit delta (176 aa).

Belongs to the ATPase delta chain family. As to quaternary structure, F-type ATPases have 2 components, F(1) - the catalytic core - and F(0) - the membrane proton channel. F(1) has five subunits: alpha(3), beta(3), gamma(1), delta(1), epsilon(1). F(0) has three main subunits: a(1), b(2) and c(10-14). The alpha and beta chains form an alternating ring which encloses part of the gamma chain. F(1) is attached to F(0) by a central stalk formed by the gamma and epsilon chains, while a peripheral stalk is formed by the delta and b chains.

The protein resides in the cell membrane. In terms of biological role, f(1)F(0) ATP synthase produces ATP from ADP in the presence of a proton or sodium gradient. F-type ATPases consist of two structural domains, F(1) containing the extramembraneous catalytic core and F(0) containing the membrane proton channel, linked together by a central stalk and a peripheral stalk. During catalysis, ATP synthesis in the catalytic domain of F(1) is coupled via a rotary mechanism of the central stalk subunits to proton translocation. Functionally, this protein is part of the stalk that links CF(0) to CF(1). It either transmits conformational changes from CF(0) to CF(1) or is implicated in proton conduction. The chain is ATP synthase subunit delta from Hamiltonella defensa subsp. Acyrthosiphon pisum (strain 5AT).